The chain runs to 342 residues: RNA 3'-terminal phosphate cyclase (342 aa).

ATP is bound by residues Gln-103 and 283–287 (YLADQ). The Tele-AMP-histidine intermediate role is filled by His-308.

Belongs to the RNA 3'-terminal cyclase family. Type 1 subfamily.

The protein resides in the cytoplasm. The enzyme catalyses a 3'-end 3'-phospho-ribonucleotide-RNA + ATP = a 3'-end 2',3'-cyclophospho-ribonucleotide-RNA + AMP + diphosphate. Functionally, catalyzes the conversion of 3'-phosphate to a 2',3'-cyclic phosphodiester at the end of RNA. The mechanism of action of the enzyme occurs in 3 steps: (A) adenylation of the enzyme by ATP; (B) transfer of adenylate to an RNA-N3'P to produce RNA-N3'PP5'A; (C) and attack of the adjacent 2'-hydroxyl on the 3'-phosphorus in the diester linkage to produce the cyclic end product. The biological role of this enzyme is unknown but it is likely to function in some aspects of cellular RNA processing. The protein is RNA 3'-terminal phosphate cyclase (rtcA) of Escherichia coli O157:H7.